A 952-amino-acid polypeptide reads, in one-letter code: Anion exchange protein 4 (952 aa).

A disordered region spans residues 1-41 (MKLPGQGDFESSDAHENAHSEEPDSGLGPGPGLNGPSGIDI). Residues 12–22 (SDAHENAHSEE) show a composition bias toward basic and acidic residues. 4 helical membrane passes run 385-405 (AVFYIYLATVTNAITFGGLLG), 413-433 (GVLESFLGTAVAGAAFCLMAG), 470-490 (VGIWVTAFCLALVATEASLLV), and 501-521 (FCALISLIFIYDAMGKMLNLI). N-linked (GlcNAc...) asparagine glycosylation is found at Asn546 and Asn569. 7 helical membrane-spanning segments follow: residues 593 to 613 (VPDIAFFSLLLFFTSFLCAIA), 634 to 654 (FSSVLAILLGCGLDTFLGLAT), 681 to 701 (PWWLSVAAALPALLLSILIFM), 727 to 747 (LFCVAVLMLFTSALGLPWYVS), 784 to 804 (GLVVFVLTGVSIFLAPVLKFI), 807 to 827 (PVLYGIFLYMGVAALSSIQFV), and 870 to 890 (VVKSTPAAIVFPLMLLGLVAI). Positions 915 to 938 (ETIPENRSEPEHLFSGNDSEDSEL) are disordered. N-linked (GlcNAc...) asparagine glycosylation is found at Asn920, Asn931, and Asn948.

The protein belongs to the anion exchanger (TC 2.A.31) family. In terms of tissue distribution, expressed in submandibular gland (SMG) duct and cortical collecting duct (CCD) of kidney. Lower expressed in duodenal villi.

It is found in the basolateral cell membrane. The enzyme catalyses 2 hydrogencarbonate(out) + chloride(in) + Na(+)(out) = 2 hydrogencarbonate(in) + chloride(out) + Na(+)(in). The catalysed reaction is K(+)(in) + 2 hydrogencarbonate(in) + chloride(out) = K(+)(out) + 2 hydrogencarbonate(out) + chloride(in). It catalyses the reaction Li(+)(in) + 2 hydrogencarbonate(in) + chloride(out) = Li(+)(out) + 2 hydrogencarbonate(out) + chloride(in). It carries out the reaction Rb(+)(in) + 2 hydrogencarbonate(in) + chloride(out) = Rb(+)(out) + 2 hydrogencarbonate(out) + chloride(in). The enzyme catalyses Cs(+)(in) + 2 hydrogencarbonate(in) + chloride(out) = Cs(+)(out) + 2 hydrogencarbonate(out) + chloride(in). With respect to regulation, cl(-)/HCO3(-) exchanger activity is substantially increased in response to 5 uM isoproterenol. Cl(-)/HCO3(-) exchanger activity is increased by both forskolin and coexpression with the catalytic subunit alpha of PKA. Functionally, electroneutral Cl(-)/HCO3(-) antiporter that favors chloride ion entry and efflux of hydrogencarbonate and sodium ion across the basolateral membrane and may participate in salivary secretion. Also mediates Cl(-)/HCO3(-) exchange activity in the presence of K(+) as well as Cs(+), Li(+), and Rb(+). Does not contribute to Cl(-)/HCO3(-) exchanger in the apical membrane of the upper villous epithelium. This Mus musculus (Mouse) protein is Anion exchange protein 4.